The following is a 219-amino-acid chain: Thymidylate kinase (219 aa).

10–17 (GLEGAGKT) serves as a coordination point for ATP.

This sequence belongs to the thymidylate kinase family.

The enzyme catalyses dTMP + ATP = dTDP + ADP. Phosphorylation of dTMP to form dTDP in both de novo and salvage pathways of dTTP synthesis. The protein is Thymidylate kinase of Pectobacterium carotovorum subsp. carotovorum (strain PC1).